An 823-amino-acid polypeptide reads, in one-letter code: ATP-dependent DNA helicase At3g02060, chloroplastic (823 aa).

A chloroplast-targeting transit peptide spans 1-53 (MMSLLPNPDPITVPLVLKLCSFPPPRRLFSLRLRRFTRKSSSLLPLVAVSSLS). Positions 285–447 (LTERETPMDR…LTGFRDASLI (163 aa)) constitute a Helicase ATP-binding domain. 298 to 305 (GDVGFGKT) is an ATP binding site. A DEEQ box motif is present at residues 400 to 403 (DEEQ). The 158-residue stretch at 465-622 (RKEKVIEAIK…GFQLAEKDMG (158 aa)) folds into the Helicase C-terminal domain.

It belongs to the helicase family.

It is found in the plastid. The protein resides in the chloroplast. It carries out the reaction ATP + H2O = ADP + phosphate + H(+). The sequence is that of ATP-dependent DNA helicase At3g02060, chloroplastic from Arabidopsis thaliana (Mouse-ear cress).